Consider the following 51-residue polypeptide: Large ribosomal subunit protein eL39 (51 aa).

The protein belongs to the eukaryotic ribosomal protein eL39 family.

This is Large ribosomal subunit protein eL39 from Methanosarcina barkeri (strain Fusaro / DSM 804).